We begin with the raw amino-acid sequence, 88 residues long: Small ribosomal subunit protein bS20 (88 aa).

This sequence belongs to the bacterial ribosomal protein bS20 family.

Binds directly to 16S ribosomal RNA. The chain is Small ribosomal subunit protein bS20 from Clostridium kluyveri (strain NBRC 12016).